A 219-amino-acid polypeptide reads, in one-letter code: Octanoyltransferase (219 aa).

The region spanning 37–219 (EHSPDQLWIL…DFNDVQVILQ (183 aa)) is the BPL/LPL catalytic domain. Residues 76–83 (RGGQVTWH), 143–145 (SLG), and 156–158 (GLA) contribute to the substrate site. The active-site Acyl-thioester intermediate is the Cys174.

It belongs to the LipB family.

The protein localises to the cytoplasm. It catalyses the reaction octanoyl-[ACP] + L-lysyl-[protein] = N(6)-octanoyl-L-lysyl-[protein] + holo-[ACP] + H(+). It functions in the pathway protein modification; protein lipoylation via endogenous pathway; protein N(6)-(lipoyl)lysine from octanoyl-[acyl-carrier-protein]: step 1/2. In terms of biological role, catalyzes the transfer of endogenously produced octanoic acid from octanoyl-acyl-carrier-protein onto the lipoyl domains of lipoate-dependent enzymes. Lipoyl-ACP can also act as a substrate although octanoyl-ACP is likely to be the physiological substrate. This chain is Octanoyltransferase, found in Acinetobacter baylyi (strain ATCC 33305 / BD413 / ADP1).